A 116-amino-acid polypeptide reads, in one-letter code: Thioredoxin H-type (116 aa).

The Thioredoxin domain maps to 2-115 (AEEAQVIACH…HKIAVHAPIT (114 aa)). Catalysis depends on nucleophile residues C39 and C42. Cysteines 39 and 42 form a disulfide.

Belongs to the thioredoxin family. Plant H-type subfamily.

It is found in the cytoplasm. In terms of biological role, participates in various redox reactions through the reversible oxidation of the active center dithiol to a disulfide. The H form is known to activate a number of cytosolic enzymes. This chain is Thioredoxin H-type, found in Fagopyrum esculentum (Common buckwheat).